We begin with the raw amino-acid sequence, 147 residues long: Small ribosomal subunit protein uS12 (147 aa).

It belongs to the universal ribosomal protein uS12 family. As to quaternary structure, part of the 30S ribosomal subunit.

In terms of biological role, with S4 and S5 plays an important role in translational accuracy. Located at the interface of the 30S and 50S subunits. The sequence is that of Small ribosomal subunit protein uS12 from Thermococcus kodakarensis (strain ATCC BAA-918 / JCM 12380 / KOD1) (Pyrococcus kodakaraensis (strain KOD1)).